The chain runs to 240 residues: MMVAMIIENPLRGSYIERPNRFTVAVYVDGERRLAHLRDPGRLRELLIPGNDVILRKASSGNRKTEFDVIALRRDDEWVLVNSGFHSDLAASIIESSAVDEFRGFRIEKRECSFGRSRIDFLLASENERMLVEVKGCTLVRENLALFPDAPTERGRRHVEELERALSEGYHSSVLFLVFGRSARFFSPNHEMDPEFSSALRRAHEAGVNVIPYTLATDINEKVLVYPLRRIAVRWPGESP.

The protein belongs to the SfsA family.

This Methanothermobacter thermautotrophicus (strain ATCC 29096 / DSM 1053 / JCM 10044 / NBRC 100330 / Delta H) (Methanobacterium thermoautotrophicum) protein is Sugar fermentation stimulation protein homolog.